The sequence spans 383 residues: S-adenosylmethionine synthase (383 aa).

Histidine 15 contributes to the ATP binding site. Position 17 (aspartate 17) interacts with Mg(2+). Glutamate 43 is a binding site for K(+). Glutamate 56 and glutamine 99 together coordinate L-methionine. The flexible loop stretch occupies residues 99–109 (QSPDINQGVDR). Residues 164-166 (DAK), 230-231 (RF), aspartate 239, 245-246 (RK), alanine 262, and lysine 266 contribute to the ATP site. Aspartate 239 is an L-methionine binding site. L-methionine is bound at residue lysine 270.

This sequence belongs to the AdoMet synthase family. Homotetramer; dimer of dimers. The cofactor is Mg(2+). K(+) serves as cofactor.

It localises to the cytoplasm. The enzyme catalyses L-methionine + ATP + H2O = S-adenosyl-L-methionine + phosphate + diphosphate. Its pathway is amino-acid biosynthesis; S-adenosyl-L-methionine biosynthesis; S-adenosyl-L-methionine from L-methionine: step 1/1. In terms of biological role, catalyzes the formation of S-adenosylmethionine (AdoMet) from methionine and ATP. The overall synthetic reaction is composed of two sequential steps, AdoMet formation and the subsequent tripolyphosphate hydrolysis which occurs prior to release of AdoMet from the enzyme. The polypeptide is S-adenosylmethionine synthase (Shewanella amazonensis (strain ATCC BAA-1098 / SB2B)).